The primary structure comprises 82 residues: Putative ribonuclease VapC34 (82 aa).

D4 lines the Mg(2+) pocket.

Belongs to the PINc/VapC protein family. Mg(2+) is required as a cofactor.

In terms of biological role, toxic component of a possible type II toxin-antitoxin (TA) system. A putative RNase. Its cognate antitoxin is VapB34. This is Putative ribonuclease VapC34 (vapC34) from Mycobacterium tuberculosis (strain CDC 1551 / Oshkosh).